Here is a 138-residue protein sequence, read N- to C-terminus: Large ribosomal subunit protein uL16 (138 aa).

The span at 1–16 shows a compositional bias: basic residues; it reads MLIPRRVKHRKQHHPG. The disordered stretch occupies residues 1–25; that stretch reads MLIPRRVKHRKQHHPGRSGAATGGT.

It belongs to the universal ribosomal protein uL16 family. As to quaternary structure, part of the 50S ribosomal subunit.

Functionally, binds 23S rRNA and is also seen to make contacts with the A and possibly P site tRNAs. This Pseudarthrobacter chlorophenolicus (strain ATCC 700700 / DSM 12829 / CIP 107037 / JCM 12360 / KCTC 9906 / NCIMB 13794 / A6) (Arthrobacter chlorophenolicus) protein is Large ribosomal subunit protein uL16.